Consider the following 32-residue polypeptide: Cytochrome b6-f complex subunit 7 (32 aa).

Residues 9–27 (AAVFWVLIPVGLLGGAILL) traverse the membrane as a helical segment.

It belongs to the PetM family. As to quaternary structure, the 4 large subunits of the cytochrome b6-f complex are cytochrome b6, subunit IV (17 kDa polypeptide, PetD), cytochrome f and the Rieske protein, while the 4 small subunits are PetG, PetL, PetM and PetN. The complex functions as a dimer.

The protein localises to the cellular thylakoid membrane. Its function is as follows. Component of the cytochrome b6-f complex, which mediates electron transfer between photosystem II (PSII) and photosystem I (PSI), cyclic electron flow around PSI, and state transitions. The protein is Cytochrome b6-f complex subunit 7 of Prochlorococcus marinus (strain MIT 9211).